Reading from the N-terminus, the 466-residue chain is Trigger factor (466 aa).

Residues 166–245 (GDFAQIDLVA…LNAVKERELP (80 aa)) enclose the PPIase FKBP-type domain. Disordered stretches follow at residues 313 to 332 (LEQE…TESS) and 424 to 466 (LPDD…AADK). The span at 426–444 (DDGEAVDEDATPEDTDAPA) shows a compositional bias: acidic residues. Over residues 453-466 (PKKKAAAKKKAADK) the composition is skewed to basic residues.

The protein belongs to the FKBP-type PPIase family. Tig subfamily.

Its subcellular location is the cytoplasm. The enzyme catalyses [protein]-peptidylproline (omega=180) = [protein]-peptidylproline (omega=0). Functionally, involved in protein export. Acts as a chaperone by maintaining the newly synthesized protein in an open conformation. Functions as a peptidyl-prolyl cis-trans isomerase. This is Trigger factor from Leifsonia xyli subsp. xyli (strain CTCB07).